The chain runs to 143 residues: Putative glycerol transporter Lin0368 (143 aa).

A run of 4 helical transmembrane segments spans residues 6–26, 27–47, 60–80, and 90–110; these read GMIGFCIAGMIVMSVWTPLAE, NYGIFGGYLAAFIIIGPMWFM, AAFVDMAVGIGICGIMRDVFM, and LPTIGLVAIGAVLAGIVAAAI. The disordered stretch occupies residues 118–143; sequence HEAKQEKTEPGMNIKEEERLNENQLV.

The protein resides in the membrane. Its function is as follows. Could be involved in the glycerol uptake either via facilitated diffusion or active transport. This chain is Putative glycerol transporter Lin0368, found in Listeria innocua serovar 6a (strain ATCC BAA-680 / CLIP 11262).